Reading from the N-terminus, the 185-residue chain is MSRLSIHPEGNTNATSPAEPLLESDDPAVIKAELAKRGIEFQHWPAKVKLHQNSIESDILAAYAVEIARVQADGRYPTVDAIRITPDHPDREALRQKFLAEHTHAEDEVRFFVEGRGLFCLHIGAEVLQVLCEQNDCINVPAGTRHWFDMGSKPQFCAVRFFDNPEGWIASFTGDAIAERFAKLP.

Residues 1–23 (MSRLSIHPEGNTNATSPAEPLLE) are disordered. Positions 102, 104, 108, and 146 each coordinate Fe(2+). Ni(2+) is bound by residues histidine 102, histidine 104, glutamate 108, and histidine 146.

The protein belongs to the acireductone dioxygenase (ARD) family. Monomer. Fe(2+) serves as cofactor. Ni(2+) is required as a cofactor.

The enzyme catalyses 1,2-dihydroxy-5-(methylsulfanyl)pent-1-en-3-one + O2 = 3-(methylsulfanyl)propanoate + CO + formate + 2 H(+). It carries out the reaction 1,2-dihydroxy-5-(methylsulfanyl)pent-1-en-3-one + O2 = 4-methylsulfanyl-2-oxobutanoate + formate + 2 H(+). It participates in amino-acid biosynthesis; L-methionine biosynthesis via salvage pathway; L-methionine from S-methyl-5-thio-alpha-D-ribose 1-phosphate: step 5/6. Functionally, catalyzes 2 different reactions between oxygen and the acireductone 1,2-dihydroxy-3-keto-5-methylthiopentene (DHK-MTPene) depending upon the metal bound in the active site. Fe-containing acireductone dioxygenase (Fe-ARD) produces formate and 2-keto-4-methylthiobutyrate (KMTB), the alpha-ketoacid precursor of methionine in the methionine recycle pathway. Ni-containing acireductone dioxygenase (Ni-ARD) produces methylthiopropionate, carbon monoxide and formate, and does not lie on the methionine recycle pathway. The polypeptide is Acireductone dioxygenase (Prochlorococcus marinus (strain MIT 9303)).